The sequence spans 327 residues: Eukaryotic translation initiation factor 3 subunit I (327 aa).

WD repeat units lie at residues G8–D49, H51–S91, S144–N183, A188–T227, K229–E268, and G285–D324.

Belongs to the eIF-3 subunit I family. As to quaternary structure, component of the eukaryotic translation initiation factor 3 (eIF-3) complex.

The protein resides in the cytoplasm. Its function is as follows. Component of the eukaryotic translation initiation factor 3 (eIF-3) complex, which is involved in protein synthesis of a specialized repertoire of mRNAs and, together with other initiation factors, stimulates binding of mRNA and methionyl-tRNAi to the 40S ribosome. The eIF-3 complex specifically targets and initiates translation of a subset of mRNAs involved in cell proliferation. In Brugia malayi (Filarial nematode worm), this protein is Eukaryotic translation initiation factor 3 subunit I.